Here is an 882-residue protein sequence, read N- to C-terminus: Valine--tRNA ligase (882 aa).

Residues 52–62 (PNVTGSLHMGH) carry the 'HIGH' region motif. A 'KMSKS' region motif is present at residues 539–543 (KMSKS). Lys542 provides a ligand contact to ATP. The stretch at 816–882 (IDVAAERRRL…RINARLAVLQ (67 aa)) forms a coiled coil.

The protein belongs to the class-I aminoacyl-tRNA synthetase family. ValS type 1 subfamily. In terms of assembly, monomer.

It is found in the cytoplasm. The catalysed reaction is tRNA(Val) + L-valine + ATP = L-valyl-tRNA(Val) + AMP + diphosphate. Functionally, catalyzes the attachment of valine to tRNA(Val). As ValRS can inadvertently accommodate and process structurally similar amino acids such as threonine, to avoid such errors, it has a 'posttransfer' editing activity that hydrolyzes mischarged Thr-tRNA(Val) in a tRNA-dependent manner. The protein is Valine--tRNA ligase of Mycolicibacterium paratuberculosis (strain ATCC BAA-968 / K-10) (Mycobacterium paratuberculosis).